The primary structure comprises 303 residues: Probable 5-dehydro-4-deoxyglucarate dehydratase (303 aa).

This sequence belongs to the DapA family.

It carries out the reaction 5-dehydro-4-deoxy-D-glucarate + H(+) = 2,5-dioxopentanoate + CO2 + H2O. It participates in carbohydrate acid metabolism; D-glucarate degradation; 2,5-dioxopentanoate from D-glucarate: step 2/2. The polypeptide is Probable 5-dehydro-4-deoxyglucarate dehydratase (Acinetobacter baumannii (strain AB307-0294)).